The primary structure comprises 353 residues: MAMFPPVEDSVLQNNPDFVNLYNKLTNVVLNSDCSTQNGPRAKERASVRQELDRRRLISAKQHLLTCAISSATPSSTPPATRASSRLQPPKGHQAGGSNSQQQQPSLPEPLLDLLIVLPPLLDANNPPLPQDTLQLLFAHPPLSELETLLPALAPIIASNLRTWALGLARIAHPSTNASFLHRHIASLPTTLSGWRSDLAAAETELSSHRLRSLAALTSLLQAATNALSLLIRALEVKHGKVARSLELRAAEASLHARRYDADAVIAAASVRRAFYTPEAITALRNYGAHLRDAKMRSEERVRGLAAELGEYGVGVDGGENKEKKMREMSRVYREMTRQMDDTRRDLDRLNQG.

Residues isoleucine 69–serine 106 are disordered. Residues serine 70 to arginine 86 are compositionally biased toward low complexity. Positions glycine 319–glycine 353 form a coiled coil.

This is an uncharacterized protein from Gibberella zeae (strain ATCC MYA-4620 / CBS 123657 / FGSC 9075 / NRRL 31084 / PH-1) (Wheat head blight fungus).